The sequence spans 385 residues: MSWQQRVDDALTARRATDTLRRRYVVSQGAGRWLVANGRQYLNFSSNDYLGLSQHPQIIRAWQQAATRFGVGSGGSGHISGYSVAHRALEEELAQWLGYPRALLFISGFAANQAVITALMKKNDRIVADRLSHASLLEAANLSPAQLRRFIHNDTQHLSRLLQSPCVGQQLVVTEGVYSMDGDSAPLAEIQHIARRHHAWLLVDDAHGIGVTGDEGRGTCCQRGVKPELLVVTFGKGFGVSGAAVLCSESVADYLLQFARHLVYSTSMPPAQAQALSASLAVIRSDEGRERREKLAALVQRFRAGVNASRFTLLNAHSAIQPLIVGDNSRALRLAEALRQQGCWATAIRPPTVPVGTARLRLTLTQAHEACDIDRLLEVLHGAGE.

Residue arginine 21 coordinates substrate. Residue 108–109 (GF) participates in pyridoxal 5'-phosphate binding. Histidine 133 contacts substrate. The pyridoxal 5'-phosphate site is built by serine 179, histidine 207, and threonine 233. At lysine 236 the chain carries N6-(pyridoxal phosphate)lysine. Threonine 352 lines the substrate pocket.

The protein belongs to the class-II pyridoxal-phosphate-dependent aminotransferase family. BioF subfamily. In terms of assembly, homodimer. The cofactor is pyridoxal 5'-phosphate.

It catalyses the reaction 6-carboxyhexanoyl-[ACP] + L-alanine + H(+) = (8S)-8-amino-7-oxononanoate + holo-[ACP] + CO2. It functions in the pathway cofactor biosynthesis; biotin biosynthesis. Its function is as follows. Catalyzes the decarboxylative condensation of pimeloyl-[acyl-carrier protein] and L-alanine to produce 8-amino-7-oxononanoate (AON), [acyl-carrier protein], and carbon dioxide. The sequence is that of 8-amino-7-oxononanoate synthase from Salmonella paratyphi C (strain RKS4594).